We begin with the raw amino-acid sequence, 255 residues long: Probable transcriptional regulator ycf27 (255 aa).

In terms of domain architecture, Response regulatory spans 9–122 (KILIADDESS…ELEARIRCVL (114 aa)). A 4-aspartylphosphate modification is found at aspartate 58. The H-T-H motif DNA-binding region spans 78-96 (DIPIIMLTALGDVTDRITG). Residues 137–238 (SGIINIGFLK…SRGTGYLFQR (102 aa)) constitute a DNA-binding region (ompR/PhoB-type).

Its subcellular location is the plastid. The protein localises to the chloroplast. Its function is as follows. Probable promoter-specific protein mediating the interaction between DNA and RNA polymerase. The sequence is that of Probable transcriptional regulator ycf27 (ycf27) from Galdieria sulphuraria (Red alga).